A 550-amino-acid polypeptide reads, in one-letter code: Hydroxylamine reductase (550 aa).

Positions 3, 6, 18, and 25 each coordinate [2Fe-2S] cluster. Hybrid [4Fe-2O-2S] cluster is bound by residues H249, E273, C317, C405, C433, C458, E492, and K494. C405 is modified (cysteine persulfide).

The protein belongs to the HCP family. [2Fe-2S] cluster is required as a cofactor. Requires hybrid [4Fe-2O-2S] cluster as cofactor.

Its subcellular location is the cytoplasm. It catalyses the reaction A + NH4(+) + H2O = hydroxylamine + AH2 + H(+). Its function is as follows. Catalyzes the reduction of hydroxylamine to form NH(3) and H(2)O. The protein is Hydroxylamine reductase of Pectobacterium atrosepticum (strain SCRI 1043 / ATCC BAA-672) (Erwinia carotovora subsp. atroseptica).